The following is a 548-amino-acid chain: Chaperonin GroEL (548 aa).

Residues Thr30–Pro33, Lys51, Asp87–Thr91, Gly415, Asn479–Ala481, and Asp495 each bind ATP.

This sequence belongs to the chaperonin (HSP60) family. In terms of assembly, forms a cylinder of 14 subunits composed of two heptameric rings stacked back-to-back. Interacts with the co-chaperonin GroES.

It is found in the cytoplasm. The enzyme catalyses ATP + H2O + a folded polypeptide = ADP + phosphate + an unfolded polypeptide.. Functionally, together with its co-chaperonin GroES, plays an essential role in assisting protein folding. The GroEL-GroES system forms a nano-cage that allows encapsulation of the non-native substrate proteins and provides a physical environment optimized to promote and accelerate protein folding. The protein is Chaperonin GroEL of Oleidesulfovibrio alaskensis (strain ATCC BAA-1058 / DSM 17464 / G20) (Desulfovibrio alaskensis).